The chain runs to 216 residues: Octanoyltransferase (216 aa).

The 189-residue stretch at 24 to 212 folds into the BPL/LPL catalytic domain; sequence KFRKECILFL…NLCSFLEPIN (189 aa). Substrate-binding positions include 69 to 76, 140 to 142, and 153 to 155; these read RGGDFTAH, SIG, and GIA. C171 acts as the Acyl-thioester intermediate in catalysis.

Belongs to the LipB family.

It is found in the cytoplasm. It catalyses the reaction octanoyl-[ACP] + L-lysyl-[protein] = N(6)-octanoyl-L-lysyl-[protein] + holo-[ACP] + H(+). It participates in protein modification; protein lipoylation via endogenous pathway; protein N(6)-(lipoyl)lysine from octanoyl-[acyl-carrier-protein]: step 1/2. Functionally, catalyzes the transfer of endogenously produced octanoic acid from octanoyl-acyl-carrier-protein onto the lipoyl domains of lipoate-dependent enzymes. Lipoyl-ACP can also act as a substrate although octanoyl-ACP is likely to be the physiological substrate. The protein is Octanoyltransferase of Leptospira interrogans serogroup Icterohaemorrhagiae serovar Lai (strain 56601).